A 567-amino-acid chain; its full sequence is Potassium-transporting ATPase potassium-binding subunit (567 aa).

The next 11 helical transmembrane spans lie at 3–23 (FIGWCQIALFGAVVVALVKPL), 64–84 (LTFTLAMLLFHIGGFAIIYAV), 136–156 (ALTHQNFLSAATGIVLAMALI), 179–199 (LYVLLPICIPYALFLVWQGMP), 254–274 (LSNFVQMLSIFVLGAALTNVF), 285–305 (WAILGVMGVLFVVGIAVAYWA), 330–350 (FGIVASALFAVVTTAASCGAV), 357–376 (FTALGGMIPLINMQLGEIIV), 421–441 (MLAILVLPLMYLGWTAIAVVL), 473–495 (AFGGLTGNTFFYNLTLATAMFVG), and 527–547 (GGLFVGLVVGVILIIGGLTFF).

It belongs to the KdpA family. In terms of assembly, the system is composed of three essential subunits: KdpA, KdpB and KdpC.

The protein localises to the cell inner membrane. Functionally, part of the high-affinity ATP-driven potassium transport (or Kdp) system, which catalyzes the hydrolysis of ATP coupled with the electrogenic transport of potassium into the cytoplasm. This subunit binds the periplasmic potassium ions and delivers the ions to the membrane domain of KdpB through an intramembrane tunnel. This is Potassium-transporting ATPase potassium-binding subunit from Rhodopseudomonas palustris (strain ATCC BAA-98 / CGA009).